Consider the following 484-residue polypeptide: ATP synthase subunit beta (484 aa).

An ATP-binding site is contributed by 156–163 (GGAGVGKT).

This sequence belongs to the ATPase alpha/beta chains family. In terms of assembly, F-type ATPases have 2 components, CF(1) - the catalytic core - and CF(0) - the membrane proton channel. CF(1) has five subunits: alpha(3), beta(3), gamma(1), delta(1), epsilon(1). CF(0) has three main subunits: a(1), b(2) and c(9-12). The alpha and beta chains form an alternating ring which encloses part of the gamma chain. CF(1) is attached to CF(0) by a central stalk formed by the gamma and epsilon chains, while a peripheral stalk is formed by the delta and b chains.

Its subcellular location is the cell inner membrane. It carries out the reaction ATP + H2O + 4 H(+)(in) = ADP + phosphate + 5 H(+)(out). Functionally, produces ATP from ADP in the presence of a proton gradient across the membrane. The catalytic sites are hosted primarily by the beta subunits. The sequence is that of ATP synthase subunit beta from Rhizorhabdus wittichii (strain DSM 6014 / CCUG 31198 / JCM 15750 / NBRC 105917 / EY 4224 / RW1) (Sphingomonas wittichii).